A 73-amino-acid chain; its full sequence is Small, acid-soluble spore protein C2 (73 aa).

It belongs to the alpha/beta-type SASP family.

Its function is as follows. SASP are bound to spore DNA. They are double-stranded DNA-binding proteins that cause DNA to change to an a-like conformation. They protect the DNA backbone from chemical and enzymatic cleavage and are thus involved in dormant spore's high resistance to UV light. The protein is Small, acid-soluble spore protein C2 (SASP-C2) of Priestia megaterium (Bacillus megaterium).